A 177-amino-acid chain; its full sequence is Large ribosomal subunit protein uL10 (177 aa).

The protein belongs to the universal ribosomal protein uL10 family. As to quaternary structure, part of the ribosomal stalk of the 50S ribosomal subunit. The N-terminus interacts with L11 and the large rRNA to form the base of the stalk. The C-terminus forms an elongated spine to which L12 dimers bind in a sequential fashion forming a multimeric L10(L12)X complex.

Forms part of the ribosomal stalk, playing a central role in the interaction of the ribosome with GTP-bound translation factors. The polypeptide is Large ribosomal subunit protein uL10 (Legionella pneumophila (strain Corby)).